The sequence spans 349 residues: Nuclear distribution protein nudE homolog 1-A (349 aa).

The stretch at 22 to 189 forms a coiled coil; the sequence is VAMKYKQCSE…ELAVQQKQEK (168 aa).

This sequence belongs to the nudE family. Self-associates. Interacts with pafah1b1. Post-translationally, phosphorylated in mitosis.

Its subcellular location is the cytoplasm. It is found in the cytoskeleton. It localises to the microtubule organizing center. The protein localises to the centrosome. The protein resides in the spindle. Its subcellular location is the chromosome. It is found in the centromere. It localises to the kinetochore. The protein localises to the cleavage furrow. The protein resides in the cytoplasmic vesicle membrane. Its function is as follows. Required for centrosome duplication and formation and function of the mitotic spindle. This chain is Nuclear distribution protein nudE homolog 1-A (nde1-a), found in Xenopus laevis (African clawed frog).